A 352-amino-acid polypeptide reads, in one-letter code: tRNA-specific 2-thiouridylase MnmA (352 aa).

Residues 11–18 and methionine 37 contribute to the ATP site; that span reads AMSGGVDS. Catalysis depends on cysteine 101, which acts as the Nucleophile. A disulfide bond links cysteine 101 and cysteine 197. Glycine 125 is an ATP binding site. An interaction with tRNA region spans residues 147–149; it reads KDQ. Cysteine 197 functions as the Cysteine persulfide intermediate in the catalytic mechanism. The interval 302–303 is interaction with tRNA; that stretch reads RY.

The protein belongs to the MnmA/TRMU family.

The protein resides in the cytoplasm. It catalyses the reaction S-sulfanyl-L-cysteinyl-[protein] + uridine(34) in tRNA + AH2 + ATP = 2-thiouridine(34) in tRNA + L-cysteinyl-[protein] + A + AMP + diphosphate + H(+). Its function is as follows. Catalyzes the 2-thiolation of uridine at the wobble position (U34) of tRNA, leading to the formation of s(2)U34. The protein is tRNA-specific 2-thiouridylase MnmA of Syntrophotalea carbinolica (strain DSM 2380 / NBRC 103641 / GraBd1) (Pelobacter carbinolicus).